A 166-amino-acid polypeptide reads, in one-letter code: Phosphopantetheine adenylyltransferase (166 aa).

Ser11 is a binding site for substrate. ATP is bound by residues 11–12 (SF) and His19. Substrate contacts are provided by Lys43, Ala76, and Arg90. Residues 91–93 (GLR), Glu101, and 126–132 (MQPISSS) contribute to the ATP site.

The protein belongs to the bacterial CoaD family. As to quaternary structure, homohexamer. Mg(2+) is required as a cofactor.

It is found in the cytoplasm. The catalysed reaction is (R)-4'-phosphopantetheine + ATP + H(+) = 3'-dephospho-CoA + diphosphate. Its pathway is cofactor biosynthesis; coenzyme A biosynthesis; CoA from (R)-pantothenate: step 4/5. Its function is as follows. Reversibly transfers an adenylyl group from ATP to 4'-phosphopantetheine, yielding dephospho-CoA (dPCoA) and pyrophosphate. This chain is Phosphopantetheine adenylyltransferase, found in Streptococcus uberis (strain ATCC BAA-854 / 0140J).